The primary structure comprises 774 residues: Protein translocase subunit SecA 2 (774 aa).

Residues Q94, 112 to 116, and D501 each bind ATP; that span reads GEGKT.

Belongs to the SecA family. In terms of assembly, monomer and homodimer. Part of the essential Sec protein translocation apparatus which comprises SecA, SecYEG and auxiliary proteins SecDF. Other proteins may also be involved.

Its subcellular location is the cell membrane. The protein resides in the cytoplasm. The catalysed reaction is ATP + H2O + cellular proteinSide 1 = ADP + phosphate + cellular proteinSide 2.. In terms of biological role, part of the Sec protein translocase complex. Interacts with the SecYEG preprotein conducting channel. Has a central role in coupling the hydrolysis of ATP to the transfer of proteins into and across the cell membrane, serving as an ATP-driven molecular motor driving the stepwise translocation of polypeptide chains across the membrane. The sequence is that of Protein translocase subunit SecA 2 from Mycobacterium sp. (strain JLS).